A 254-amino-acid polypeptide reads, in one-letter code: 4-hydroxy-tetrahydrodipicolinate reductase (254 aa).

7 to 12 (GASGRI) contacts NAD(+). Arginine 35 is a binding site for NADP(+). NAD(+) is bound by residues 91-93 (GTT) and 115-118 (AHNM). Residue histidine 147 is the Proton donor/acceptor of the active site. Histidine 148 lines the (S)-2,3,4,5-tetrahydrodipicolinate pocket. Lysine 151 (proton donor) is an active-site residue. 157 to 158 (GT) serves as a coordination point for (S)-2,3,4,5-tetrahydrodipicolinate.

This sequence belongs to the DapB family.

It is found in the cytoplasm. It carries out the reaction (S)-2,3,4,5-tetrahydrodipicolinate + NAD(+) + H2O = (2S,4S)-4-hydroxy-2,3,4,5-tetrahydrodipicolinate + NADH + H(+). It catalyses the reaction (S)-2,3,4,5-tetrahydrodipicolinate + NADP(+) + H2O = (2S,4S)-4-hydroxy-2,3,4,5-tetrahydrodipicolinate + NADPH + H(+). Its pathway is amino-acid biosynthesis; L-lysine biosynthesis via DAP pathway; (S)-tetrahydrodipicolinate from L-aspartate: step 4/4. Functionally, catalyzes the conversion of 4-hydroxy-tetrahydrodipicolinate (HTPA) to tetrahydrodipicolinate. In Helicobacter pylori (strain ATCC 700392 / 26695) (Campylobacter pylori), this protein is 4-hydroxy-tetrahydrodipicolinate reductase.